The following is a 185-amino-acid chain: Adenine phosphoribosyltransferase (185 aa).

The protein belongs to the purine/pyrimidine phosphoribosyltransferase family. Homodimer.

It is found in the cytoplasm. The catalysed reaction is AMP + diphosphate = 5-phospho-alpha-D-ribose 1-diphosphate + adenine. Its pathway is purine metabolism; AMP biosynthesis via salvage pathway; AMP from adenine: step 1/1. Functionally, catalyzes a salvage reaction resulting in the formation of AMP, that is energically less costly than de novo synthesis. The polypeptide is Adenine phosphoribosyltransferase (Rubrobacter xylanophilus (strain DSM 9941 / JCM 11954 / NBRC 16129 / PRD-1)).